A 156-amino-acid chain; its full sequence is Small ribosomal subunit protein uS7 (156 aa).

Belongs to the universal ribosomal protein uS7 family. As to quaternary structure, part of the 30S ribosomal subunit. Contacts proteins S9 and S11.

In terms of biological role, one of the primary rRNA binding proteins, it binds directly to 16S rRNA where it nucleates assembly of the head domain of the 30S subunit. Is located at the subunit interface close to the decoding center, probably blocks exit of the E-site tRNA. This Trichlorobacter lovleyi (strain ATCC BAA-1151 / DSM 17278 / SZ) (Geobacter lovleyi) protein is Small ribosomal subunit protein uS7.